A 795-amino-acid chain; its full sequence is MAANKDEFSVKQIFPKLGGERGARNPRYGPTSSHDLVEQMEFLYVQVIQAINNSVVNPSARICCPVVEITLGNYKSSTKNLPMGPNMDWNQVFAFDKSKGDVLSVTLKDGPTNTVINKRNFKLASEIPTRVPPDARIAPQWYSMHNTETDFYMELLMSVWFGTQVDEVYPEAWFSDACEVCASRVINTRPKVYLAPRLCYVRVTIVSGHDLISKDKNKTPSVYVTATLGKVALKTKVSSGTNPSWNQDLIFVASEPLEGTVYIRLIDREDEQHEGCIGTLKKKLTEMTPLKVPSSAPALFYDIEMPTEVKPAGDSRRFASRLKMKLATDQAYHVAEECTQYSSDNRAFVKGLWPGLLGKLEIGILGATGLKGSDEKKQTIDSYVVAKYGNKWARTRTVVNSVSPKWNEQYSWDVYEKCTVLTLGIYDNRQILEDKNKANDVPIGKVRIPLNRVQSDWIYTCSYPILKLGSSGLKKMGELQLAVRFVYVAQGYARYSAPFRWMLPKAHYKSPLSMYQIDKLRAQAVEINCANLARTEPALRSEVVSDMLKPKSRNFSIRISKDNFDRLYTVVKMVLWCVSVIASVRSTTACTPKFIALGVSFVFLFWEYYIYWLVTSWLVAYCIVLCIVVILLREILKSPRQTYNWLFYRNVTPPPLILVDLKLRKLDSINLDELAEEFDSFPSSENDLNILRMRYDRLRKIMENVMLLMGDAATQGERLLAAFTLLERPFVLIILLALCYCSMLVVCLGWDLHVRKCLIFVFICYWVQLPWFRNNLPDGSLNFFRRLPSNEDLMF.

3 consecutive C2 domains span residues 24 to 142 (RNPR…PQWY), 180 to 298 (VCAS…SAPA), and 341 to 463 (YSSD…TCSY). Residues Asn57, Asp109, and Asn113 each coordinate Ca(2+). Transmembrane regions (helical) follow at residues 590-610 (CTPK…EYYI), 612-632 (WLVT…VILL), 730-750 (FVLI…CLGW), and 752-772 (LHVR…LPWF).

Belongs to the MCTP family. Ca(2+) serves as cofactor. In terms of tissue distribution, expressed in root vascular tissues and meristems. Observed in flowers.

The protein resides in the endoplasmic reticulum membrane. In terms of biological role, may function as a signaling molecule by regulating the trafficking of other regulators. This is Multiple C2 domain and transmembrane region protein 12 from Arabidopsis thaliana (Mouse-ear cress).